The sequence spans 414 residues: Imidazolonepropionase (414 aa).

Fe(3+) is bound by residues His-73 and His-75. Zn(2+)-binding residues include His-73 and His-75. Residues Arg-82, Tyr-145, and His-178 each contribute to the 4-imidazolone-5-propanoate site. Tyr-145 is an N-formimidoyl-L-glutamate binding site. Position 249 (His-249) interacts with Fe(3+). Residue His-249 participates in Zn(2+) binding. Gln-252 is a 4-imidazolone-5-propanoate binding site. Asp-324 serves as a coordination point for Fe(3+). Position 324 (Asp-324) interacts with Zn(2+). N-formimidoyl-L-glutamate is bound by residues Asn-326 and Gly-328. Residue Ser-329 coordinates 4-imidazolone-5-propanoate.

Belongs to the metallo-dependent hydrolases superfamily. HutI family. Zn(2+) is required as a cofactor. Requires Fe(3+) as cofactor.

It is found in the cytoplasm. The enzyme catalyses 4-imidazolone-5-propanoate + H2O = N-formimidoyl-L-glutamate. The protein operates within amino-acid degradation; L-histidine degradation into L-glutamate; N-formimidoyl-L-glutamate from L-histidine: step 3/3. In terms of biological role, catalyzes the hydrolytic cleavage of the carbon-nitrogen bond in imidazolone-5-propanoate to yield N-formimidoyl-L-glutamate. It is the third step in the universal histidine degradation pathway. The polypeptide is Imidazolonepropionase (Shewanella denitrificans (strain OS217 / ATCC BAA-1090 / DSM 15013)).